A 315-amino-acid polypeptide reads, in one-letter code: L-lactate dehydrogenase (315 aa).

Residues Val16, Asp37, and 81 to 82 (GA) contribute to the NAD(+) site. Residues Gln84, Arg90, and 122–125 (NPVD) contribute to the substrate site. Residues 120–122 (VSN) and Ser145 contribute to the NAD(+) site. Residue 150–153 (DTAR) coordinates substrate. The beta-D-fructose 1,6-bisphosphate site is built by Arg155 and His170. Residue His177 is the Proton acceptor of the active site. Position 224 is a phosphotyrosine (Tyr224). Residue Thr233 participates in substrate binding.

It belongs to the LDH/MDH superfamily. LDH family. As to quaternary structure, homotetramer.

Its subcellular location is the cytoplasm. The catalysed reaction is (S)-lactate + NAD(+) = pyruvate + NADH + H(+). The protein operates within fermentation; pyruvate fermentation to lactate; (S)-lactate from pyruvate: step 1/1. Allosterically activated by fructose 1,6-bisphosphate (FBP). Functionally, catalyzes the conversion of lactate to pyruvate. This is L-lactate dehydrogenase from Treponema denticola (strain ATCC 35405 / DSM 14222 / CIP 103919 / JCM 8153 / KCTC 15104).